Here is a 240-residue protein sequence, read N- to C-terminus: DNA repair protein RecO (240 aa).

It belongs to the RecO family.

Its function is as follows. Involved in DNA repair and RecF pathway recombination. The sequence is that of DNA repair protein RecO from Xanthomonas euvesicatoria pv. vesicatoria (strain 85-10) (Xanthomonas campestris pv. vesicatoria).